The primary structure comprises 271 residues: 3-methyl-2-oxobutanoate hydroxymethyltransferase 1 (271 aa).

Residues aspartate 53 and aspartate 92 each contribute to the Mg(2+) site. Residues 53–54 (DS), aspartate 92, and lysine 120 each bind 3-methyl-2-oxobutanoate. Glutamate 122 is a Mg(2+) binding site. Residue glutamate 189 is the Proton acceptor of the active site.

This sequence belongs to the PanB family. Homodecamer; pentamer of dimers. Mg(2+) serves as cofactor.

The protein resides in the cytoplasm. The enzyme catalyses 3-methyl-2-oxobutanoate + (6R)-5,10-methylene-5,6,7,8-tetrahydrofolate + H2O = 2-dehydropantoate + (6S)-5,6,7,8-tetrahydrofolate. It participates in cofactor biosynthesis; (R)-pantothenate biosynthesis; (R)-pantoate from 3-methyl-2-oxobutanoate: step 1/2. In terms of biological role, catalyzes the reversible reaction in which hydroxymethyl group from 5,10-methylenetetrahydrofolate is transferred onto alpha-ketoisovalerate to form ketopantoate. In Burkholderia ambifaria (strain ATCC BAA-244 / DSM 16087 / CCUG 44356 / LMG 19182 / AMMD) (Burkholderia cepacia (strain AMMD)), this protein is 3-methyl-2-oxobutanoate hydroxymethyltransferase 1.